The primary structure comprises 159 residues: MKLNELSPSVPKKNRKRIGRGNSSGWGKTAGKGSNGQNSRAGGGVKPYFEGGQMPIYRRVPKRGFSNAIFKKEYTVISLAFLNENFEDGEEVSLETLFNKCLIKKGRDGVKVLGNGELNKKLTVKVHKISKSAKAAVEAKGGTVELVEVKGFERAETNK.

Residues 1–46 (MKLNELSPSVPKKNRKRIGRGNSSGWGKTAGKGSNGQNSRAGGGVK) form a disordered region. Residues 22 to 34 (NSSGWGKTAGKGS) show a composition bias toward gly residues.

Belongs to the universal ribosomal protein uL15 family. As to quaternary structure, part of the 50S ribosomal subunit.

Its function is as follows. Binds to the 23S rRNA. The sequence is that of Large ribosomal subunit protein uL15 from Fusobacterium nucleatum subsp. nucleatum (strain ATCC 25586 / DSM 15643 / BCRC 10681 / CIP 101130 / JCM 8532 / KCTC 2640 / LMG 13131 / VPI 4355).